Consider the following 171-residue polypeptide: MTKQHAFTREDLLRCSRGELFGPGNAQLPAPNMLMVDRITHISEEGGKYGKGELVAELDINPDLWFFACHFEGDPVMPGCLGLDAMWQLVGFFLGWQGLPGRGRALGSGEVKFFGQVLPEAKKVTYNIHIKRVLKGKLNMAIADGSVSVDGREIYTAEGLRVGVFTSTDNF.

Residue H70 is part of the active site.

The protein belongs to the thioester dehydratase family. FabA subfamily. As to quaternary structure, homodimer.

The protein localises to the cytoplasm. The catalysed reaction is a (3R)-hydroxyacyl-[ACP] = a (2E)-enoyl-[ACP] + H2O. The enzyme catalyses (3R)-hydroxydecanoyl-[ACP] = (2E)-decenoyl-[ACP] + H2O. It catalyses the reaction (2E)-decenoyl-[ACP] = (3Z)-decenoyl-[ACP]. The protein operates within lipid metabolism; fatty acid biosynthesis. In terms of biological role, necessary for the introduction of cis unsaturation into fatty acids. Catalyzes the dehydration of (3R)-3-hydroxydecanoyl-ACP to E-(2)-decenoyl-ACP and then its isomerization to Z-(3)-decenoyl-ACP. Can catalyze the dehydratase reaction for beta-hydroxyacyl-ACPs with saturated chain lengths up to 16:0, being most active on intermediate chain length. The sequence is that of 3-hydroxydecanoyl-[acyl-carrier-protein] dehydratase from Pseudomonas putida (strain ATCC 700007 / DSM 6899 / JCM 31910 / BCRC 17059 / LMG 24140 / F1).